The sequence spans 775 residues: WD repeat-containing protein pop1 (775 aa).

The F-box domain occupies 298–345 (KNFLTGFPAEITNLVLTHLDAPSLCAVSQVSHHWYKLVSSNEELWKSL). WD repeat units follow at residues 444-472 (EHEG…RVWD), 484-538 (GHTS…RLWS), 575-603 (GHTD…RVWK), 615-645 (GHVG…RIWN), and 657-687 (GHSN…RVWD).

In terms of assembly, homodimer and heterodimer with pop2. Binds to cdc18, phosphorylated cig2, cul1, pip1 and skp1.

Its subcellular location is the nucleus. Involved in maintenance of ploidy through proteasome dependent degradation of CDK inhibitor rum1 and S-phase initiator cdc18. Functions as a recognition factor for rum1 and cdc18, which are subsequently ubiquitinated and targeted to the 26S proteasome for degradation. Together with pop2, required for cig2 instability during G2 and M phase and cig2 degradation in exponentially growing cells. Regulates cell-cycle progression under starvation through the rum1 protein. In Schizosaccharomyces pombe (strain 972 / ATCC 24843) (Fission yeast), this protein is WD repeat-containing protein pop1 (pop1).